The sequence spans 301 residues: MTLEREAAANTAKVLSEALPYIRRYVGKTLVIKYGGNAMESDELKTGFARDIVLMKAVGINPVVVHGGGPQIGDLLKRLSIESHFIDGMRVTDAQTMDVVEMVLGGQVNKDIVNLINRHGGSAIGLTGKDAELIRAKKLTVTRQTPEMTQPEIIDIGQVGEVIGINTDLLNLLVKGDFIPVIAPIGVGANGESYNINADLVAGKVAEALKAEKLMLLTNIAGLMDKEGKVLTGLTTQQVDELIADGTIYGGMLPKIRCALEAVQGGVGSSLILDGRVPNAILLEIFTDTGVGTLISNRKRP.

Residues 68–69 (GG), R90, and N195 each bind substrate.

This sequence belongs to the acetylglutamate kinase family. ArgB subfamily.

The protein localises to the cytoplasm. The catalysed reaction is N-acetyl-L-glutamate + ATP = N-acetyl-L-glutamyl 5-phosphate + ADP. It participates in amino-acid biosynthesis; L-arginine biosynthesis; N(2)-acetyl-L-ornithine from L-glutamate: step 2/4. Functionally, catalyzes the ATP-dependent phosphorylation of N-acetyl-L-glutamate. This is Acetylglutamate kinase from Pseudomonas fluorescens (strain SBW25).